Reading from the N-terminus, the 421-residue chain is Imidazolonepropionase (421 aa).

His-81 and His-83 together coordinate Fe(3+). His-81 and His-83 together coordinate Zn(2+). 4-imidazolone-5-propanoate contacts are provided by Arg-90, Tyr-153, and His-186. Tyr-153 lines the N-formimidoyl-L-glutamate pocket. Position 251 (His-251) interacts with Fe(3+). His-251 lines the Zn(2+) pocket. A 4-imidazolone-5-propanoate-binding site is contributed by Glu-254. Asp-326 provides a ligand contact to Fe(3+). A Zn(2+)-binding site is contributed by Asp-326. N-formimidoyl-L-glutamate contacts are provided by Asn-328 and Gly-330. Ser-331 contributes to the 4-imidazolone-5-propanoate binding site.

Belongs to the metallo-dependent hydrolases superfamily. HutI family. It depends on Zn(2+) as a cofactor. The cofactor is Fe(3+).

The protein localises to the cytoplasm. The catalysed reaction is 4-imidazolone-5-propanoate + H2O = N-formimidoyl-L-glutamate. It functions in the pathway amino-acid degradation; L-histidine degradation into L-glutamate; N-formimidoyl-L-glutamate from L-histidine: step 3/3. Catalyzes the hydrolytic cleavage of the carbon-nitrogen bond in imidazolone-5-propanoate to yield N-formimidoyl-L-glutamate. It is the third step in the universal histidine degradation pathway. The sequence is that of Imidazolonepropionase from Streptococcus pyogenes serotype M12 (strain MGAS2096).